A 452-amino-acid polypeptide reads, in one-letter code: MEVKVLSSRLVRPSYPASAAAPEEEFVPSSMFDKVTYDMQMAIIYAFRPPGPSVADIEKGLAAVLGVYRLFAGQVVRGGGGELRGVVLNDHGARLVEACVDGSLADIAPAKPSPVVLRLHPSLEGEIEEVVQVQLTRFACGSLAVGFTANHAVADGHATSDFLVAWGRAARGLAVAATAAAPPHHHPGMFRPRDPPLVEFEHRGVEYYRPPPPAAGVDGDVGGDHKQQHGHGGEEASHGIVIHKAHFTKDFIARLRAAASEGRGRPFSRFETILAHVWRTMTRARGLGNPLQSSTIRISVDGRQRLSAPAGYFGNLVLWAFPRATVGDLLGRPLKHAAQVIHDAVARADAAYFRSFVDFASSGAVEGEGLAPTAVLKDVLCPDLEVDSWLTFPFYELDFGGGCPTYFMPSYFPTEGMLFLVPSYLGDGSVDAFVPVFDHNLEAFKQSCYSIE.

Residue His151 is the Proton acceptor of the active site. The interval 213 to 234 (PAAGVDGDVGGDHKQQHGHGGE) is disordered. Residues 222–234 (GGDHKQQHGHGGE) are compositionally biased toward basic and acidic residues. The active-site Proton acceptor is Asp398.

Belongs to the plant acyltransferase family. Highly expressed in roots. Expressed at low levels in flowers.

In terms of biological role, hydroxycinnamoyl transferase that catalyzes the transfer of an acyl from p-coumaryol-CoA to putrescine, to produce coumaroyl putrescine. Can use feruloyl-CoA, caffeoyl-CoA and sinapoyl-CoA as acyl donors. Seems to be able to transfer the acyl group from feruloyl-CoA to the acyl acceptors agmatine and spermidine. This chain is Putrescine hydroxycinnamoyltransferase, found in Oryza sativa subsp. japonica (Rice).